Reading from the N-terminus, the 545-residue chain is Afadin- and alpha-actinin-binding protein B (545 aa).

2 coiled-coil regions span residues 106–287 (RSKE…SQRK) and 358–442 (ARGD…AIRL). Residues 497-545 (HDRHLASSGDHYQRPRKTLPITPSSKHSLTQRESVAWRDSSISPNGTDF) are disordered. Composition is skewed to polar residues over residues 517–529 (ITPS…TQRE) and 536–545 (SSISPNGTDF).

This sequence belongs to the ADIP family. Interacts with WRAP73.

The protein resides in the cell junction. It localises to the adherens junction. It is found in the cytoplasm. The protein localises to the cytoskeleton. Its subcellular location is the microtubule organizing center. The protein resides in the centrosome. It localises to the centriolar satellite. Functionally, belongs to an adhesion system, which plays a role in the organization of homotypic, interneuronal and heterotypic cell-cell adherens junctions (AJs). Involved in cell movement. Acts as a centrosome maturation factor, probably by maintaining the integrity of the pericentriolar material and proper microtubule nucleation at mitotic spindle poles. The function seems to implicate at least in part WRAP73; the SSX2IP:WRAP73 complex is proposed to act as regulator of spindle anchoring at the mitotic centrosome. The sequence is that of Afadin- and alpha-actinin-binding protein B (ssx2ip-b) from Xenopus laevis (African clawed frog).